The primary structure comprises 204 residues: MELLDVDGAWLYTPEIMRDERGEFLEWFRGRTFQEKIGHPLSLAQANCSVSRKAFCAASTSPTPPPGQAKYVTCASGTVLDVVVDVRRGSPTFGRWAAVRLDAARHQGLYLAEGLGHAFMALTDDATVVYLCSQPYVAEAERAVDPLDPAIGIEWPTDIDIVPVGEGTPTHRPWRRPRRPGILPDYEGVPGALHRGGGRRGTGP.

Residues R21, E26, Q45–N47, K70, and H117 each bind substrate. Y130 functions as the Proton donor in the catalytic mechanism. E141 contacts substrate. The tract at residues V164–P204 is disordered.

Belongs to the dTDP-4-dehydrorhamnose 3,5-epimerase family.

The protein operates within antibiotic biosynthesis. In terms of biological role, involved in the biosynthesis of one of the two 2,6-deoxysugars, dTDP-L-oleandrose, attached to the macrolactone ring oleandolide to produce the aglycone antibiotic oleandomycin. Probably catalyzes the conversion of dTDP-4-keto-2,6-dideoxy-alpha-D-glucose to dTDP-4-keto-2,6-dideoxy-beta-L-galactose. This Streptomyces antibioticus protein is Probable dTDP-4-oxo-2,6-dideoxy-D-glucose 3,5-epimerase.